The following is a 354-amino-acid chain: Hydrophobic dipeptide epimerase (354 aa).

Substrate is bound by residues Thr-134, Lys-159, and 159-161; that span reads KIK. Residue Asp-189 coordinates Mg(2+). Residue Asn-191 coordinates substrate. Residues Glu-215 and Asp-240 each contribute to the Mg(2+) site. Substrate is bound by residues Lys-264, 292-295, and 318-320; these read CMAE and DLD.

The protein belongs to the mandelate racemase/muconate lactonizing enzyme family. The cofactor is Mg(2+).

Catalyzes the epimerization of L-Ile-L-Tyr to L-Ile-D-Tyr (in vitro). Catalyzes the epimerization of dipeptides, with a preference for substrates with a hydrophobic or basic amino acid in the first position, followed by an aromatic residue in the second position. Has epimerase activity with L-Ile-L-Tyr, L-Val-L-Tyr and L-Arg-L-Tyr (in vitro). The polypeptide is Hydrophobic dipeptide epimerase (Enterococcus faecalis (strain ATCC 700802 / V583)).